The primary structure comprises 286 residues: Shikimate dehydrogenase (NADP(+)) (286 aa).

Residues 22–24 and Thr71 contribute to the shikimate site; that span reads SRS. The active-site Proton acceptor is Lys75. Position 87 (Glu87) interacts with NADP(+). Residues Asn96 and Asp111 each contribute to the shikimate site. NADP(+) contacts are provided by residues 136–140, 160–165, and Ile225; these read GAGGA and NRTPER. A shikimate-binding site is contributed by Tyr227. Residue Gly248 participates in NADP(+) binding.

The protein belongs to the shikimate dehydrogenase family. Homodimer.

It catalyses the reaction shikimate + NADP(+) = 3-dehydroshikimate + NADPH + H(+). The protein operates within metabolic intermediate biosynthesis; chorismate biosynthesis; chorismate from D-erythrose 4-phosphate and phosphoenolpyruvate: step 4/7. Functionally, involved in the biosynthesis of the chorismate, which leads to the biosynthesis of aromatic amino acids. Catalyzes the reversible NADPH linked reduction of 3-dehydroshikimate (DHSA) to yield shikimate (SA). This is Shikimate dehydrogenase (NADP(+)) from Sinorhizobium medicae (strain WSM419) (Ensifer medicae).